Here is a 162-residue protein sequence, read N- to C-terminus: Phospholipase A and acyltransferase 3 (162 aa).

Over 1–133 (MRAPIPEPKP…VARSDQVRDV (133 aa)) the chain is Cytoplasmic. The region spanning 13–129 (LIEIFRPFYR…LRYGVARSDQ (117 aa)) is the LRAT domain. Catalysis depends on residues H23 and H35. C113 functions as the Acyl-thioester intermediate in the catalytic mechanism. A helical membrane pass occupies residues 134–154 (IIAASVAGMGLAAMSLIGVMF). Over 155–162 (SRNKRQKQ) the chain is Lumenal.

The protein belongs to the H-rev107 family. As to quaternary structure, interacts with PPP2R1A; this interaction might decrease PP2A activity. In terms of tissue distribution, widely expressed. Low expression, if any, in hematopoietic cells and thymus. In testis, confined to round spermatids. Expressed in normal ovarian epithelial cells. Down-regulated in some ovarian carcinomas and testicular germ cell tumors. Highly expressed in white adipose tissue.

It is found in the cell membrane. It localises to the cytoplasm. The protein localises to the cytosol. The protein resides in the perinuclear region. Its subcellular location is the peroxisome membrane. It is found in the mitochondrion membrane. It localises to the nucleus envelope. The protein localises to the lysosome membrane. The protein resides in the endoplasmic reticulum membrane. The enzyme catalyses a 1,2-diacyl-sn-glycero-3-phosphocholine + H2O = a 1-acyl-sn-glycero-3-phosphocholine + a fatty acid + H(+). It carries out the reaction a 1,2-diacyl-sn-glycero-3-phosphocholine + H2O = a 2-acyl-sn-glycero-3-phosphocholine + a fatty acid + H(+). It catalyses the reaction 1,2-dihexadecanoyl-sn-glycero-3-phosphocholine + H2O = 1-hexadecanoyl-sn-glycero-3-phosphocholine + hexadecanoate + H(+). The catalysed reaction is 1,2-dihexadecanoyl-sn-glycero-3-phosphocholine + H2O = 2-hexadecanoyl-sn-glycero-3-phosphocholine + hexadecanoate + H(+). The enzyme catalyses 1-hexadecanoyl-2-(9Z-octadecenoyl)-sn-glycero-3-phosphocholine + H2O = 2-(9Z-octadecenoyl)-sn-glycero-3-phosphocholine + hexadecanoate + H(+). It carries out the reaction 1-hexadecanoyl-2-(9Z-octadecenoyl)-sn-glycero-3-phosphocholine + H2O = 1-hexadecanoyl-sn-glycero-3-phosphocholine + (9Z)-octadecenoate + H(+). It catalyses the reaction 1-hexadecanoyl-2-(5Z,8Z,11Z,14Z-eicosatetraenoyl)-sn-glycero-3-phosphocholine + H2O = 1-hexadecanoyl-sn-glycero-3-phosphocholine + (5Z,8Z,11Z,14Z)-eicosatetraenoate + H(+). The catalysed reaction is 1-hexadecanoyl-2-(5Z,8Z,11Z,14Z-eicosatetraenoyl)-sn-glycero-3-phosphocholine + H2O = 2-(5Z,8Z,11Z,14Z)-eicosatetraenoyl-sn-glycero-3-phosphocholine + hexadecanoate + H(+). The enzyme catalyses 1-hexadecanoyl-2-(9Z,12Z-octadecadienoyl)-sn-glycero-3-phosphoethanolamine + H2O = 1-hexadecanoyl-sn-glycero-3-phosphoethanolamine + (9Z,12Z)-octadecadienoate + H(+). It carries out the reaction 1-hexadecanoyl-2-(9Z,12Z-octadecadienoyl)-sn-glycero-3-phosphoethanolamine + H2O = 2-(9Z,12Z)-octadecadienoyl-sn-glycero-3-phosphoethanolamine + hexadecanoate + H(+). It catalyses the reaction 1-hexadecanoyl-2-(5Z,8Z,11Z,14Z-eicosatetraenoyl)-sn-glycero-3-phosphoethanolamine + H2O = 1-hexadecanoyl-sn-glycero-3-phosphoethanolamine + (5Z,8Z,11Z,14Z)-eicosatetraenoate + H(+). The catalysed reaction is 1-hexadecanoyl-2-(5Z,8Z,11Z,14Z-eicosatetraenoyl)-sn-glycero-3-phosphoethanolamine + H2O = 2-(5Z,8Z,11Z,14Z)-eicosatetraenoyl-sn-glycero-3-phosphoethanolamine + hexadecanoate + H(+). The enzyme catalyses 1-hexanoyl-2-acyl-sn-glycero-3-phosphocholine + H2O = hexanoate + a 2-acyl-sn-glycero-3-phosphocholine + H(+). It carries out the reaction 1-hexanoyl-2-acyl-sn-glycero-3-phosphocholine + H2O = 1-hexanoyl-sn-glycero-3-phosphocholine + a fatty acid + H(+). It catalyses the reaction 1,2-diheptadecanoyl-sn-glycero-3-phosphoethanolamine + 1-(9Z-octadecenoyl)-2-hexadecanoyl-sn-glycero-3-phosphocholine = 1,2-diheptadecanoyl-sn-glycero-3-phospho-N-hexadecanoyl-ethanolamine + 1-(9Z-octadecenoyl)-sn-glycero-3-phosphocholine + H(+). The catalysed reaction is 1,2-diheptadecanoyl-sn-glycero-3-phosphoethanolamine + 1-(9Z-octadecenoyl)-2-hexadecanoyl-sn-glycero-3-phosphocholine = 1,2-diheptadecanoyl-sn-glycero-3-phospho-N-(9Z-octadecenoyl)-ethanolamine + 2-hexadecanoyl-sn-glycero-3-phosphocholine + H(+). The enzyme catalyses 1,2-dihexanoyl-sn-glycero-3-phosphoethanolamine + 2-heptanoyl-sn-glycero-3-phosphocholine = hexanoyl-sn-glycero-3-phosphoethanolamine + 1-hexanoyl-2-heptanoyl-sn-glycero-3-phosphocholine. It carries out the reaction 1-hexadecanoyl-2-octadecanoyl-sn-glycero-3-phosphocholine + H2O = octadecanoate + 1-hexadecanoyl-sn-glycero-3-phosphocholine + H(+). It catalyses the reaction 1-hexadecanoyl-2-octadecanoyl-sn-glycero-3-phosphocholine + H2O = 2-octadecanoyl-sn-glycero-3-phosphocholine + hexadecanoate + H(+). The catalysed reaction is 1-octadecanoyl-2-hexadecanoyl-sn-glycero-3-phosphocholine + H2O = 1-octadecanoyl-sn-glycero-3-phosphocholine + hexadecanoate + H(+). The enzyme catalyses 1-octadecanoyl-2-hexadecanoyl-sn-glycero-3-phosphocholine + H2O = 2-hexadecanoyl-sn-glycero-3-phosphocholine + octadecanoate + H(+). It carries out the reaction 1-hexadecanoyl-2-(9Z,12Z-octadecadienoyl)-sn-glycero-3-phosphocholine + H2O = (9Z,12Z)-octadecadienoate + 1-hexadecanoyl-sn-glycero-3-phosphocholine + H(+). It catalyses the reaction 1-hexadecanoyl-2-(9Z,12Z-octadecadienoyl)-sn-glycero-3-phosphocholine + H2O = 2-(9Z,12Z-octadecadienoyl)-sn-glycero-3-phosphocholine + hexadecanoate + H(+). The catalysed reaction is 1,2-di-(9Z-octadecenoyl)-sn-glycero-3-phosphocholine + H2O = 2-(9Z-octadecenoyl)-sn-glycero-3-phosphocholine + (9Z)-octadecenoate + H(+). The enzyme catalyses 1,2-dihexadecanoyl-sn-glycero-3-phosphocholine + H2O = hexadecanoyl-sn-glycero-3-phosphocholine + hexadecanoate + H(+). It carries out the reaction 1,2-di-(9Z-octadecenoyl)-sn-glycero-3-phosphocholine + H2O = 1-(9Z-octadecenoyl)-sn-glycero-3-phosphocholine + (9Z)-octadecenoate + H(+). It catalyses the reaction 1,2-di-(9Z-octadecenoyl)-sn-glycero-3-phosphoethanolamine + 1,2-dihexadecanoyl-sn-glycero-3-phosphocholine = hexadecanoyl-sn-glycero-3-phosphocholine + N-hexadecanoyl-1,2-di-(9Z-octadecenoyl)-sn-glycero-3-phosphoethanolamine + H(+). The catalysed reaction is 1,2-di-(9Z,12Z-octadecadienoyl)-sn-glycero-3-phosphocholine + H2O = 1-(9Z,12Z)-octadecadienoyl-sn-glycero-3-phosphocholine + (9Z,12Z)-octadecadienoate + H(+). Exhibits both phospholipase A1/2 and acyltransferase activities. Shows phospholipase A1 (PLA1) and A2 (PLA2) activity, catalyzing the calcium-independent release of fatty acids from the sn-1 or sn-2 position of glycerophospholipids. For most substrates, PLA1 activity is much higher than PLA2 activity. Shows O-acyltransferase activity,catalyzing the transfer of a fatty acyl group from glycerophospholipid to the hydroxyl group of lysophospholipid. Shows N-acyltransferase activity, catalyzing the calcium-independent transfer of a fatty acyl group at the sn-1 position of phosphatidylcholine (PC) and other glycerophospholipids to the primary amine of phosphatidylethanolamine (PE), forming N-acylphosphatidylethanolamine (NAPE), which serves as precursor for N-acylethanolamines (NAEs). Exhibits high N-acyltransferase activity and low phospholipase A1/2 activity. Required for complete organelle rupture and degradation that occur during eye lens terminal differentiation, when fiber cells that compose the lens degrade all membrane-bound organelles in order to provide lens with transparency to allow the passage of light. Organelle membrane degradation is probably catalyzed by the phospholipase activity. Its function is as follows. (Microbial infection) Acts as a host factor for picornaviruses: required during early infection to promote viral genome release into the cytoplasm. May act as a cellular sensor of membrane damage at sites of virus entry, which relocalizes to sites of membrane rupture upon virus unfection. Facilitates safe passage of the RNA away from LGALS8, enabling viral genome translation by host ribosome. May also be involved in initiating pore formation, increasing pore size or in maintaining pores for genome delivery. The lipid-modifying enzyme activity is required for this process. This is Phospholipase A and acyltransferase 3 from Homo sapiens (Human).